We begin with the raw amino-acid sequence, 989 residues long: Zinc finger SWIM domain-containing protein 4 (989 aa).

A disordered region spans residues 1–32 (MEPPAAKRSRGCPAGPEERDAGAGAARGRGRP). Residues 139–176 (YHVSISFDRCKITSVSCGCDNRDLFYCAHVVALSLYRI) form an SWIM-type zinc finger.

In Homo sapiens (Human), this protein is Zinc finger SWIM domain-containing protein 4 (ZSWIM4).